A 200-amino-acid polypeptide reads, in one-letter code: Type 1 fimbriae regulatory protein FimB (200 aa).

Residues 8–189 (KKRNFLTHSE…NAGRFYGIWD (182 aa)) enclose the Tyr recombinase domain. Active-site residues include arginine 47, lysine 72, histidine 141, arginine 144, and histidine 167. Residue tyrosine 176 is the O-(3'-phospho-DNA)-tyrosine intermediate of the active site.

This sequence belongs to the 'phage' integrase family.

Its function is as follows. FimB is one of the 2 regulatory proteins which control the phase variation of type 1 fimbriae in E.coli. These proteins mediate the periodic inversion of a 300bp DNA segment that harbors the promoter for the fimbrial structural gene, fimA. FimB switches fimA on. The polypeptide is Type 1 fimbriae regulatory protein FimB (fimB) (Escherichia coli O157:H7).